A 292-amino-acid chain; its full sequence is 11-beta-hydroxysteroid dehydrogenase 1 (292 aa).

The Cytoplasmic portion of the chain corresponds to 2–7 (HFMKKY). The helical; Signal-anchor for type II membrane protein transmembrane segment at 8–24 (LLPILVLFLAYYYYSTK) threads the bilayer. Topologically, residues 25-292 (EEFRPEMLQG…SFTFDKLISS (268 aa)) are lumenal. NADP(+) contacts are provided by residues 41 to 67 (GASK…TARS), 92 to 93 (TM), and 119 to 121 (NHI). A glycan (N-linked (GlcNAc...) asparagine) is linked at N162. Residue S170 participates in substrate binding. Y183 (proton acceptor) is an active-site residue. Residue 183 to 187 (YSASK) participates in NADP(+) binding. N207 is a glycosylation site (N-linked (GlcNAc...) asparagine). 218–222 (INTET) is a binding site for NADP(+).

Belongs to the short-chain dehydrogenases/reductases (SDR) family. As to quaternary structure, homodimer. In terms of tissue distribution, detected in adrenal gland, liver, kidney, testis, and at lower levels in brain and lung (at protein level).

It localises to the endoplasmic reticulum membrane. The catalysed reaction is an 11beta-hydroxysteroid + NADP(+) = an 11-oxosteroid + NADPH + H(+). The enzyme catalyses corticosterone + NADP(+) = 11-dehydrocorticosterone + NADPH + H(+). It catalyses the reaction a 7beta-hydroxysteroid + NADP(+) = a 7-oxosteroid + NADPH + H(+). It carries out the reaction 7-oxocholesterol + NADPH + H(+) = 7beta-hydroxycholesterol + NADP(+). The catalysed reaction is 7-oxocholesterol + NADPH + H(+) = 7alpha-hydroxycholesterol + NADP(+). The enzyme catalyses chenodeoxycholate + NADP(+) = 7-oxolithocholate + NADPH + H(+). It catalyses the reaction 7-oxolithocholate + NADPH + H(+) = ursodeoxycholate + NADP(+). It carries out the reaction glycochenodeoxycholate + NADP(+) = 7-oxoglycolithocholate + NADPH + H(+). The catalysed reaction is taurochenodeoxycholate + NADP(+) = 7-oxotaurolithocholate + NADPH + H(+). The enzyme catalyses tauroursodeoxycholate + NADP(+) = 7-oxotaurolithocholate + NADPH + H(+). It catalyses the reaction glycoursodeoxycholate + NADP(+) = 7-oxoglycolithocholate + NADPH + H(+). It carries out the reaction 7-oxopregnenolone + NADPH + H(+) = 7beta-hydroxypregnenolone + NADP(+). The catalysed reaction is 3beta,7alpha-dihydroxyandrost-5-en-17-one + NADP(+) = 3beta-hydroxy-5-androstene-7,17-dione + NADPH + H(+). The enzyme catalyses 3beta-hydroxy-5-androstene-7,17-dione + NADPH + H(+) = 3beta,7beta-dihydroxyandrost-5-en-17-one + NADP(+). It catalyses the reaction 3beta-hydroxy-5alpha-androstane-7,17-dione + NADPH + H(+) = 3beta,7beta-dihydroxy-5alpha-androstan-17-one + NADP(+). Its pathway is steroid metabolism. In terms of biological role, controls the reversible conversion of biologically active glucocorticoids such as 11-dehydrocorticosterone to corticosterone in the presence of NADP(H). Participates in the corticosteroid receptor-mediated anti-inflammatory response, as well as metabolic and homeostatic processes. Bidirectional in vitro, predominantly functions as a reductase in vivo, thereby increasing the concentration of active glucocorticoids. It has broad substrate specificity, besides glucocorticoids, it accepts other steroid and sterol substrates. Interconverts 7-oxo- and 7-hydroxy-neurosteroids such as 7-oxopregnenolone and 7beta-hydroxypregnenolone, 7-oxodehydroepiandrosterone (3beta-hydroxy-5-androstene-7,17-dione) and 7beta-hydroxydehydroepiandrosterone (3beta,7beta-dihydroxyandrost-5-en-17-one), among others. Catalyzes reversibly the conversion of the major dietary oxysterol, 7-ketocholesterol (7-oxocholesterol), into the more polar 7-beta-hydroxycholesterol and 7-alpha-hhydroxycholesterol metabolites. 7-oxocholesterol is one of the most important oxysterols, it participates in several events such as induction of apoptosis, accumulation in atherosclerotic lesions, lipid peroxidation, and induction of foam cell formation. Mediates the 7-oxo reduction of 7-oxolithocholate mainly to chenodeoxycholate, and to a lesser extent to ursodeoxycholate, both in its free form and when conjugated to glycine or taurine, providing a link between glucocorticoid activation and bile acid metabolism. Catalyzes the synthesis of 7-beta-25-dihydroxycholesterol from 7-oxo-25-hydroxycholesterol in vitro, which acts as a ligand for the G-protein-coupled receptor (GPCR) Epstein-Barr virus-induced gene 2 (EBI2) and may thereby regulate immune cell migration. This chain is 11-beta-hydroxysteroid dehydrogenase 1 (HSD11B1), found in Mesocricetus auratus (Golden hamster).